Reading from the N-terminus, the 237-residue chain is D-aminoacyl-tRNA deacylase (237 aa).

This sequence belongs to the DtdA deacylase family. In terms of assembly, monomer. Zn(2+) is required as a cofactor.

It carries out the reaction a D-aminoacyl-tRNA + H2O = a tRNA + a D-alpha-amino acid + H(+). The enzyme catalyses glycyl-tRNA(Ala) + H2O = tRNA(Ala) + glycine + H(+). Functionally, D-aminoacyl-tRNA deacylase with broad substrate specificity. By recycling D-aminoacyl-tRNA to D-amino acids and free tRNA molecules, this enzyme counteracts the toxicity associated with the formation of D-aminoacyl-tRNA entities in vivo. The chain is D-aminoacyl-tRNA deacylase from Saccharolobus islandicus (strain Y.N.15.51 / Yellowstone #2) (Sulfolobus islandicus).